The following is a 146-amino-acid chain: Large ribosomal subunit protein bL21 (146 aa).

A disordered region spans residues 103-146; the sequence is DGKSPTIGPRPKKEKAVEPVEGASDDKPRRAAKKTAAKTAEDAD. Residues 116 to 131 show a composition bias toward basic and acidic residues; that stretch reads EKAVEPVEGASDDKPR.

The protein belongs to the bacterial ribosomal protein bL21 family. Part of the 50S ribosomal subunit. Contacts protein L20.

Its function is as follows. This protein binds to 23S rRNA in the presence of protein L20. This Nitrobacter winogradskyi (strain ATCC 25391 / DSM 10237 / CIP 104748 / NCIMB 11846 / Nb-255) protein is Large ribosomal subunit protein bL21.